A 537-amino-acid polypeptide reads, in one-letter code: Putative cysteine ligase BshC (537 aa).

A coiled-coil region spans residues 422–450 (IEKVEGMIEQQRRLYQDLLDEVAGNQNNI).

This sequence belongs to the BshC family.

In terms of biological role, involved in bacillithiol (BSH) biosynthesis. May catalyze the last step of the pathway, the addition of cysteine to glucosamine malate (GlcN-Mal) to generate BSH. The protein is Putative cysteine ligase BshC of Staphylococcus aureus (strain MRSA252).